We begin with the raw amino-acid sequence, 361 residues long: DNA polymerase subunit gamma-2, mitochondrial (361 aa).

The transit peptide at methionine 1–arginine 18 directs the protein to the mitochondrion.

As to quaternary structure, component of the DNA polymerase gamma complex consisting of two subunits: the catalytic subunit DNApol-gamma/DNApolG1 and the accessory subunit PolG2/DNApol-gamma35. As to expression, expressed in ovaries (at protein level).

The protein resides in the mitochondrion. In terms of biological role, as accessory component of the DNA polymerase gamma complex is involved in the replication of mitochondrial DNA. Does not bind DNA. Essential for mitochondrial DNA maintenance and larval development. The protein is DNA polymerase subunit gamma-2, mitochondrial of Drosophila melanogaster (Fruit fly).